Reading from the N-terminus, the 370-residue chain is NADH-quinone oxidoreductase subunit D 2 (370 aa).

Belongs to the complex I 49 kDa subunit family. NDH-1 is composed of 14 different subunits. Subunits NuoB, C, D, E, F, and G constitute the peripheral sector of the complex.

Its subcellular location is the cell inner membrane. It catalyses the reaction a quinone + NADH + 5 H(+)(in) = a quinol + NAD(+) + 4 H(+)(out). Functionally, NDH-1 shuttles electrons from NADH, via FMN and iron-sulfur (Fe-S) centers, to quinones in the respiratory chain. The immediate electron acceptor for the enzyme in this species is believed to be ubiquinone. Couples the redox reaction to proton translocation (for every two electrons transferred, four hydrogen ions are translocated across the cytoplasmic membrane), and thus conserves the redox energy in a proton gradient. The polypeptide is NADH-quinone oxidoreductase subunit D 2 (Solibacter usitatus (strain Ellin6076)).